A 301-amino-acid chain; its full sequence is Protein p34 (301 aa).

A run of 5 helical transmembrane segments spans residues 15–35 (YLSV…WVVT), 40–60 (ILAA…NLIA), 83–103 (TIFS…FSSV), 120–140 (TVMY…TYVI), and 171–191 (LSDY…LYIF).

It belongs to the cation diffusion facilitator (CDF) transporter (TC 2.A.4) family.

The protein localises to the cell membrane. This is Protein p34 (p34) from Rickettsia rickettsii (strain Sheila Smith).